We begin with the raw amino-acid sequence, 81 residues long: Small ribosomal subunit protein bS16 (81 aa).

It belongs to the bacterial ribosomal protein bS16 family.

The polypeptide is Small ribosomal subunit protein bS16 (Clostridium acetobutylicum (strain ATCC 824 / DSM 792 / JCM 1419 / IAM 19013 / LMG 5710 / NBRC 13948 / NRRL B-527 / VKM B-1787 / 2291 / W)).